We begin with the raw amino-acid sequence, 696 residues long: Spindle assembly checkpoint component MAD1 (696 aa).

2 disordered regions span residues methionine 1–asparagine 22 and glutamine 394–lysine 415. Residues lysine 402 to glutamate 413 are compositionally biased toward basic and acidic residues.

The protein belongs to the MAD1 family. Component of the mitotic checkpoint complex (MCC).

It is found in the nucleus. Central component of the spindle assembly checkpoint which is a feedback control that prevents cells with incompletely assembled spindles from leaving mitosis. The protein is Spindle assembly checkpoint component MAD1 of Candida albicans (strain SC5314 / ATCC MYA-2876) (Yeast).